A 41-amino-acid chain; its full sequence is Photosystem I reaction center subunit IX (41 aa).

The chain crosses the membrane as a helical span at residues 7-27 (YLSTAPVLTLVSLTAVAGLLI).

The protein belongs to the PsaJ family.

It localises to the plastid. Its subcellular location is the chloroplast thylakoid membrane. Its function is as follows. May help in the organization of the PsaE and PsaF subunits. The chain is Photosystem I reaction center subunit IX from Chlorella vulgaris (Green alga).